Here is a 377-residue protein sequence, read N- to C-terminus: Lipoyl synthase, mitochondrial (377 aa).

[4Fe-4S] cluster contacts are provided by cysteine 103, cysteine 108, cysteine 114, cysteine 134, cysteine 138, cysteine 141, and serine 349. A Radical SAM core domain is found at glutamate 119–leucine 338.

Belongs to the radical SAM superfamily. Lipoyl synthase family. It depends on [4Fe-4S] cluster as a cofactor.

The protein resides in the mitochondrion. It catalyses the reaction [[Fe-S] cluster scaffold protein carrying a second [4Fe-4S](2+) cluster] + N(6)-octanoyl-L-lysyl-[protein] + 2 oxidized [2Fe-2S]-[ferredoxin] + 2 S-adenosyl-L-methionine + 4 H(+) = [[Fe-S] cluster scaffold protein] + N(6)-[(R)-dihydrolipoyl]-L-lysyl-[protein] + 4 Fe(3+) + 2 hydrogen sulfide + 2 5'-deoxyadenosine + 2 L-methionine + 2 reduced [2Fe-2S]-[ferredoxin]. Its pathway is protein modification; protein lipoylation via endogenous pathway; protein N(6)-(lipoyl)lysine from octanoyl-[acyl-carrier-protein]: step 2/2. Its function is as follows. Catalyzes the radical-mediated insertion of two sulfur atoms into the C-6 and C-8 positions of the octanoyl moiety bound to the lipoyl domains of lipoate-dependent enzymes, thereby converting the octanoylated domains into lipoylated derivatives. The chain is Lipoyl synthase, mitochondrial from Drosophila sechellia (Fruit fly).